Here is a 396-residue protein sequence, read N- to C-terminus: Phosphoglycerate kinase (396 aa).

Residues 21-23 (DLN), arginine 36, 59-62 (HFDR), arginine 118, and arginine 151 contribute to the substrate site. Residues lysine 201, glutamate 323, and 353–356 (GGDT) each bind ATP.

Belongs to the phosphoglycerate kinase family. Monomer.

Its subcellular location is the cytoplasm. The enzyme catalyses (2R)-3-phosphoglycerate + ATP = (2R)-3-phospho-glyceroyl phosphate + ADP. Its pathway is carbohydrate degradation; glycolysis; pyruvate from D-glyceraldehyde 3-phosphate: step 2/5. The protein is Phosphoglycerate kinase of Granulibacter bethesdensis (strain ATCC BAA-1260 / CGDNIH1).